Consider the following 274-residue polypeptide: Diaminopimelate epimerase (274 aa).

Substrate contacts are provided by Asn-11, Gln-44, and Asn-64. The active-site Proton donor is Cys-73. Substrate-binding positions include 74–75 (GN), Asn-157, Asn-190, and 208–209 (ER). Catalysis depends on Cys-217, which acts as the Proton acceptor. Substrate is bound at residue 218-219 (GS).

It belongs to the diaminopimelate epimerase family. As to quaternary structure, homodimer.

Its subcellular location is the cytoplasm. The enzyme catalyses (2S,6S)-2,6-diaminopimelate = meso-2,6-diaminopimelate. It participates in amino-acid biosynthesis; L-lysine biosynthesis via DAP pathway; DL-2,6-diaminopimelate from LL-2,6-diaminopimelate: step 1/1. Functionally, catalyzes the stereoinversion of LL-2,6-diaminopimelate (L,L-DAP) to meso-diaminopimelate (meso-DAP), a precursor of L-lysine and an essential component of the bacterial peptidoglycan. The polypeptide is Diaminopimelate epimerase (Yersinia pseudotuberculosis serotype O:1b (strain IP 31758)).